The primary structure comprises 42 residues: Photosystem I reaction center subunit IX (42 aa).

The chain crosses the membrane as a helical span at residues 7–27 (YLSVAPVLSTLWFGILAGLLI).

The protein belongs to the PsaJ family.

The protein resides in the plastid. Its subcellular location is the chloroplast thylakoid membrane. Its function is as follows. May help in the organization of the PsaE and PsaF subunits. The protein is Photosystem I reaction center subunit IX of Lemna minor (Common duckweed).